Reading from the N-terminus, the 1002-residue chain is MFWKWCFRLSIVFVGLWLLLDLSSRLGAEVFWFREVGYLQVFLLRLVSRGVLWVVAAGVTAVYLWGNLALAQRLKYPRSLKIAEVRREEAELSVGLKNFLSPQYSRLNAPKINDAGHLKPFRLRWLLPLAFVFSLLAGLILVHYGKIALAYWYPAFNKNSLPIITPFRLETIWELGRQVFSQVLYLGLIVGIAIAILIYSQFFLRAIAVVLSVVFGTILFYNWAKVLQYFFPTPFNSTEPLFGKDISFYIFSLPLWELLELWLMGMFLYGFIAVTLTYLLSADSLSQGIFPGFSPQQQRHLYGMGGLLMLMVAFSYWLSRYELVYSPRGVSYGASYTDVVVQLPIYNILCVLGLAIAFYLLWRTIFWRAKSQYRQFVFYGLGAYLFVVVAAGSVLPTIVQYLIVQPNELQREQTYIQRTIALTRQAFGLETIDARTFNPQGDLTTAAIQANDLTIRNIRLWDQRPLLETNRQLQQFRPYYRFPDADIDRYTLEAEAAANRPASANQSPAPAEIAATERRQVLIAARELDYSAVPEQAQTWINQHLIYTHGYGFTMSPVNTVGPGGLPEYFVKDIAGSNEGALSTSSEAVRDSIPIGQPRIYYGEITNTYVMTGTRVRELDYPSGSDNAYNSYSGLGGIVIGSGWRKGLFAMYLKDWQMLFTRDFLPETKVLFRRNVKSRIQAIAPFLKFDSDPYLVSADGSPAFSGRDNYLYWMVDAYTTSDRYPYSDPDNNGINYIRNSVKIVIDAYNGSVKFYIADPTDPIIATWSAIFPGMFQPLSDMPVTLRSHIRYPLDYFAIQSERLMTYHMTDTQVFYNREDQWQIPNEIYGSESRPVEPYYLITSLPTVPFEEFILLLPYTPKQRTNLIAWLAARSDGENYGKLLLYNFPKERLVYGTEQIEARINQDPVISQQISLWNRQGSRAIQGNLLVIPIEQSLLYVEPIYLEATQNSLPTLVRVVVAYENRIVMAQTLEQALQAIFQPEVTPAPAIIRPFEEGTTPDS.

Transmembrane regions (helical) follow at residues 7–29, 49–71, 123–145, 178–200, 202–224, 258–280, 300–319, 339–361, and 382–404; these read FRLS…LGAE, RGVL…LALA, LRWL…VHYG, QVFS…LIYS, FFLR…YNWA, LLEL…TYLL, HLYG…YWLS, VVVQ…FYLL, and GAYL…YLIV.

This sequence belongs to the UPF0182 family.

The protein resides in the cell membrane. The sequence is that of UPF0182 protein alr1037 from Nostoc sp. (strain PCC 7120 / SAG 25.82 / UTEX 2576).